A 441-amino-acid polypeptide reads, in one-letter code: Glutamate--tRNA ligase 1 (441 aa).

The 'HIGH' region signature appears at 8 to 18 (PSPTGYIHIGN). The 'KMSKS' region signature appears at 239–243 (ALSKR). K242 contributes to the ATP binding site.

This sequence belongs to the class-I aminoacyl-tRNA synthetase family. Glutamate--tRNA ligase type 1 subfamily. In terms of assembly, monomer.

The protein resides in the cytoplasm. The enzyme catalyses tRNA(Glu) + L-glutamate + ATP = L-glutamyl-tRNA(Glu) + AMP + diphosphate. Catalyzes the attachment of glutamate to tRNA(Glu) in a two-step reaction: glutamate is first activated by ATP to form Glu-AMP and then transferred to the acceptor end of tRNA(Glu). In Roseobacter denitrificans (strain ATCC 33942 / OCh 114) (Erythrobacter sp. (strain OCh 114)), this protein is Glutamate--tRNA ligase 1.